We begin with the raw amino-acid sequence, 845 residues long: Proto-oncogene vav (845 aa).

Positions 1 to 119 (MELWRQCTHW…YTLSALSWTP (119 aa)) constitute a Calponin-homology (CH) domain. Residues 194 to 373 (KRCCCLREIQ…RDLAQCVNEV (180 aa)) form the DH domain. The 103-residue stretch at 402–504 (RPKIDGELKI…WMEQFEMAIS (103 aa)) folds into the PH domain. The segment at 515–564 (GHDFQMFSFEETTSCKACQMLLRGTFYQGYRCHRCRASAHKECLGRVPPC) adopts a Phorbol-ester/DAG-type zinc-finger fold. The 69-residue stretch at 592 to 660 (LGLPKMEVFQ…PCNRVKPYVH (69 aa)) folds into the SH3 1 domain. Positions 671–765 (WYAGPMERAG…SLDTTLQFPF (95 aa)) constitute an SH2 domain. The SH3 2 domain maps to 782–842 (KYFGTAKARY…PANYVEEDYS (61 aa)). Phosphotyrosine occurs at positions 826 and 844.

As to quaternary structure, interacts with SHB. Interacts with SH2B2, GRB2, GRB3, DOCK2, SLA, TEC and ZNF655/VIK. Interacts with SIAH2; without leading to its degradation. Associates with BLNK, PLCG1, GRB2 and NCK1 in a B-cell antigen receptor-dependent fashion. Interacts with CBLB; which inhibits tyrosine phosphorylation and down-regulates activity. May interact with CCPG1. Interacts with CLNK. Interacts with THEMIS2. Interacts with NEK3 and this interaction is prolactin-dependent. Interacts with ITK. Interacts with PTK2B/PYK2. Interacts with HCK. Interacts with PTK2B/PYK2. Interacts (via SH2 domain) with SYK. Interacts with ANKRD54. Interacts with CD6. Interacts with isoform 2 of CRACR2A. Interacts with LCP2; this interaction plays a role in TCR-mediated cytokine production. Post-translationally, phosphorylated on tyrosine residues by HCK in response to IFNG and bacterial lipopolysaccharide (LPS). Phosphorylated by FYN. In terms of tissue distribution, widely expressed in hematopoietic cells but not in other cell types.

Functionally, couples tyrosine kinase signals with the activation of the Rho/Rac GTPases, thus leading to cell differentiation and/or proliferation. The protein is Proto-oncogene vav (VAV1) of Homo sapiens (Human).